The sequence spans 318 residues: Bis(5'-nucleosyl)-tetraphosphatase, symmetrical (318 aa).

The disordered stretch occupies residues 269–318; the sequence is PGREVTGPAPVARAPRRPRERLGRQRSRGNRGNAGNTAVPAKPQVDTPQD. Residues 282–297 show a composition bias toward basic residues; it reads APRRPRERLGRQRSRG.

The protein belongs to the Ap4A hydrolase family.

It carries out the reaction P(1),P(4)-bis(5'-adenosyl) tetraphosphate + H2O = 2 ADP + 2 H(+). Functionally, hydrolyzes diadenosine 5',5'''-P1,P4-tetraphosphate to yield ADP. The protein is Bis(5'-nucleosyl)-tetraphosphatase, symmetrical of Xanthomonas oryzae pv. oryzae (strain KACC10331 / KXO85).